Consider the following 1454-residue polypeptide: Receptor-type tyrosine-protein phosphatase T (1454 aa).

Positions 1 to 29 (MGSLGGLALCLLRLLLLGLQRPPLPGAGA) are cleaved as a signal peptide. The Extracellular segment spans residues 30–770 (QSAAGGCSFD…EKQVDNTVKM (741 aa)). The 162-residue stretch at 34–195 (GGCSFDEHYS…VRVLAHPCRK (162 aa)) folds into the MAM domain. 4 N-linked (GlcNAc...) asparagine glycosylation sites follow: asparagine 82, asparagine 102, asparagine 141, and asparagine 212. In terms of domain architecture, Ig-like C2-type spans 197–288 (PHFLRLQNVE…SGVSNYAELI (92 aa)). Cysteine 217 and cysteine 271 form a disulfide bridge. 3 consecutive Fibronectin type-III domains span residues 295–388 (PIAP…TKCA), 393–487 (GPQN…TEED), and 488–594 (VPGA…SAPS). N-linked (GlcNAc...) asparagine glycosylation is found at asparagine 425, asparagine 514, asparagine 551, asparagine 605, asparagine 658, and asparagine 688. A Fibronectin type-III 4 domain is found at 670-767 (AELKPSNLPV…VEPEKQVDNT (98 aa)). The helical transmembrane segment at 771 to 791 (AGVIAGLLMFIIILLGVMLTI) threads the bilayer. The Cytoplasmic portion of the chain corresponds to 792–1454 (KRRKLAKKQK…EVALEYLSSF (663 aa)). Residues 800–852 (QKETQSGAQREMGPVASTDKPTAKLGTNRNDEGFSSSSQDVNGFTDGSRGELS) form a disordered region. Over residues 824 to 841 (LGTNRNDEGFSSSSQDVN) the composition is skewed to polar residues. Tyrosine-protein phosphatase domains are found at residues 902-1156 (FKEE…ILEA) and 1188-1450 (IKDE…ALEY). Substrate-binding positions include aspartate 1065, 1097-1103 (CSAGAGR), and glutamine 1141. The active-site Phosphocysteine intermediate is cysteine 1097. Phosphoserine is present on serine 1221. Catalysis depends on cysteine 1391, which acts as the Phosphocysteine intermediate.

It belongs to the protein-tyrosine phosphatase family. Receptor class 2B subfamily. As to expression, expression is restricted to the CNS. Distributed throughout the brain and spinal cord.

The protein resides in the membrane. It catalyses the reaction O-phospho-L-tyrosyl-[protein] + H2O = L-tyrosyl-[protein] + phosphate. Its function is as follows. May be involved in both signal transduction and cellular adhesion in the CNS. May have specific signaling roles in the tyrosine phosphorylation/dephosphorylation pathway in the anterior compartment of the adult cerebellar cortex. The protein is Receptor-type tyrosine-protein phosphatase T (Ptprt) of Mus musculus (Mouse).